The sequence spans 155 residues: Putative pre-16S rRNA nuclease (155 aa).

This sequence belongs to the YqgF nuclease family.

It is found in the cytoplasm. Its function is as follows. Could be a nuclease involved in processing of the 5'-end of pre-16S rRNA. This is Putative pre-16S rRNA nuclease from Wolbachia sp. subsp. Drosophila simulans (strain wRi).